Here is a 104-residue protein sequence, read N- to C-terminus: Intracellular chorismate mutase (104 aa).

In terms of domain architecture, Chorismate mutase spans 23–104 (AVPEIDDLRR…LRLGRGRLGY (82 aa)). Residues R59, V68, and E72 each coordinate chorismate.

In terms of assembly, homodimer. Probably interacts with AroG (MSMEG_4244).

It localises to the cytoplasm. The catalysed reaction is chorismate = prephenate. It functions in the pathway metabolic intermediate biosynthesis; prephenate biosynthesis; prephenate from chorismate: step 1/1. The formation of the complex with AroG activates the chorismate mutase activity. Its function is as follows. Catalyzes the Claisen rearrangement of chorismate to prephenate. Probably involved in the aromatic amino acid biosynthesis. The polypeptide is Intracellular chorismate mutase (Mycolicibacterium smegmatis (strain ATCC 700084 / mc(2)155) (Mycobacterium smegmatis)).